The primary structure comprises 274 residues: Large ribosomal subunit protein uL2 (274 aa).

A disordered region spans residues 1-23 (MAIKIYRPTSPGRRHHSVSSFEE).

Belongs to the universal ribosomal protein uL2 family. Part of the 50S ribosomal subunit. Forms a bridge to the 30S subunit in the 70S ribosome.

Functionally, one of the primary rRNA binding proteins. Required for association of the 30S and 50S subunits to form the 70S ribosome, for tRNA binding and peptide bond formation. It has been suggested to have peptidyltransferase activity; this is somewhat controversial. Makes several contacts with the 16S rRNA in the 70S ribosome. This Dehalococcoides mccartyi (strain ATCC BAA-2100 / JCM 16839 / KCTC 5957 / BAV1) protein is Large ribosomal subunit protein uL2.